A 257-amino-acid chain; its full sequence is Homeobox protein EMX1 (257 aa).

A DNA-binding region (homeobox) is located at residues Pro-159 to Lys-218. The interval Arg-216–Asp-257 is disordered. Positions Gln-217–Lys-230 are enriched in basic and acidic residues.

The protein belongs to the EMX homeobox family. Interacts with WRD11 (via the N-terminal and the central portion of the protein); the interaction associates EMX1 with GLI3. In terms of tissue distribution, cerebral cortex. Expressed in the olfactory bulbs.

The protein localises to the nucleus. Functionally, transcription factor, which in cooperation with EMX2, acts to generate the boundary between the roof and archipallium in the developing brain. May function in combinations with OTX1/2 to specify cell fates in the developing central nervous system. This is Homeobox protein EMX1 (Emx1) from Mus musculus (Mouse).